A 365-amino-acid chain; its full sequence is Class I histocompatibility antigen, B alpha chain (365 aa).

An N-terminal signal peptide occupies residues 1–24; that stretch reads MTVMAPRTLLLLLSGALVLTETWA. The interval 25–114 is alpha-1; that stretch reads GSHSMRYFST…ALGYYNQSEA (90 aa). Residues 25-308 lie on the Extracellular side of the membrane; the sequence is GSHSMRYFST…EPPSQPTIPI (284 aa). N110 carries N-linked (GlcNAc...) asparagine glycosylation. The tract at residues 115–206 is alpha-2; sequence GSHTIQMMSG…ENGKETLQRA (92 aa). Cystine bridges form between C125/C188 and C227/C283. Residues 207–298 form an alpha-3 region; that stretch reads EPPKTHVTHH…GLPEPLTLRW (92 aa). The Ig-like C1-type domain maps to 209 to 297; the sequence is PKTHVTHHPV…EGLPEPLTLR (89 aa). The tract at residues 299 to 308 is connecting peptide; it reads EPPSQPTIPI. The helical transmembrane segment at 309-332 threads the bilayer; sequence MGIVAILAILGAVVTGAVVTAVMW. Topologically, residues 333–365 are cytoplasmic; the sequence is RKKSSDKKGGSYSQAARSDSAQGSDVSLTACKV. Residues 337-361 are disordered; that stretch reads SDKKGGSYSQAARSDSAQGSDVSLT. Polar residues predominate over residues 346-359; the sequence is QAARSDSAQGSDVS. Phosphoserine occurs at positions 356 and 359.

It belongs to the MHC class I family. As to quaternary structure, heterodimer of an alpha chain and a beta chain (beta-2-microglobulin).

The protein resides in the membrane. Its function is as follows. Involved in the presentation of foreign antigens to the immune system. The protein is Class I histocompatibility antigen, B alpha chain of Saguinus oedipus (Cotton-top tamarin).